The following is a 449-amino-acid chain: MLETPKVLLKNLQDCKIHFIGIGGIGISGLAKYLKAQGATISGSDIAISPSVKYLKALGVEINIPHDPKAINNQDVIIHSAIIKEDNTEIQRAKELEIPILSRKDALYSILKDKRVFSVCGAHGKSSITAMLSAICPAFGAIIGAHSKEFDSNVRESANDSLVFEADESDSSFLFSNPFCAIVPNTEPEHLEHYDHDLERFFFAYEYFLDHAQKRVIYKEDPFLKNYSKDAIVLEKKDIYNIQYILKDGEPYTSFELKDLGAFLVWGLGEHNATNASLAILSALDELNLEEIRNNLLNFKGIKKRFDILQKNALILIDDYAHHPTEISATLKSARIYADLLDTQEKIVVIWQAHKYSRLMDNLEEFKKCFLEHCDRLIILPVYSASEVKRDIDLKAHFKHYNPTFIDRVRKKGDFLELLVNDNVVETIEKGFVIGFGAGDITYQLRGEM.

121–127 is a binding site for ATP; it reads GAHGKSS.

It belongs to the MurCDEF family.

The protein resides in the cytoplasm. It carries out the reaction UDP-N-acetyl-alpha-D-muramate + L-alanine + ATP = UDP-N-acetyl-alpha-D-muramoyl-L-alanine + ADP + phosphate + H(+). The protein operates within cell wall biogenesis; peptidoglycan biosynthesis. Functionally, cell wall formation. The polypeptide is UDP-N-acetylmuramate--L-alanine ligase (Helicobacter pylori (strain P12)).